The primary structure comprises 167 residues: CS6 fimbrial subunit B (167 aa).

Residues 1–21 (MLKKIIPAIVLIAGTSGVVNA) form the signal peptide.

The protein localises to the fimbrium. In Escherichia coli, this protein is CS6 fimbrial subunit B (cssB).